A 120-amino-acid chain; its full sequence is NAD(P)H-quinone oxidoreductase subunit 3, chloroplastic (120 aa).

The next 3 membrane-spanning stretches (helical) occupy residues 10–30 (FWVF…ISGV), 64–84 (IFAL…PWAM), and 88–108 (VLGV…IVGS).

Belongs to the complex I subunit 3 family. As to quaternary structure, NDH is composed of at least 16 different subunits, 5 of which are encoded in the nucleus.

It is found in the plastid. It localises to the chloroplast thylakoid membrane. The catalysed reaction is a plastoquinone + NADH + (n+1) H(+)(in) = a plastoquinol + NAD(+) + n H(+)(out). It carries out the reaction a plastoquinone + NADPH + (n+1) H(+)(in) = a plastoquinol + NADP(+) + n H(+)(out). Its function is as follows. NDH shuttles electrons from NAD(P)H:plastoquinone, via FMN and iron-sulfur (Fe-S) centers, to quinones in the photosynthetic chain and possibly in a chloroplast respiratory chain. The immediate electron acceptor for the enzyme in this species is believed to be plastoquinone. Couples the redox reaction to proton translocation, and thus conserves the redox energy in a proton gradient. The polypeptide is NAD(P)H-quinone oxidoreductase subunit 3, chloroplastic (Pelargonium hortorum (Common geranium)).